Consider the following 195-residue polypeptide: Transcriptional regulator LdrP (195 aa).

The HTH crp-type domain occupies 110-182 (GELRARIARY…YRRVYLLDLA (73 aa)). Positions 142–161 (HEEIADATASIRESVSKVLA) form a DNA-binding region, H-T-H motif.

Activates transcription. Positively regulates PcrtB promoter upstream of the crtB operon in a cAMP-independent manner. Regulated genes include genes encoding DNA photolyase, phytoene synthase and cytochrome P450 monooxygenase, which are involved in carotenoid biosynthesis. Positively regulates the light-inducible gene cluster in the megaplasmid in a cAMP-independent manner. The protein is Transcriptional regulator LdrP of Thermus thermophilus (strain ATCC BAA-163 / DSM 7039 / HB27).